A 115-amino-acid chain; its full sequence is Putative membrane protein insertion efficiency factor (115 aa).

It belongs to the UPF0161 family.

The protein resides in the cell membrane. In terms of biological role, could be involved in insertion of integral membrane proteins into the membrane. This is Putative membrane protein insertion efficiency factor from Mycobacterium avium (strain 104).